A 535-amino-acid chain; its full sequence is Tetrathionate hydrolase (535 aa).

The signal sequence occupies residues 1–39 (MNLKILVGLFILGIIILSAMTFLNFTTIVAQDKGDQQPK). N50 carries N-linked (GlcNAc...) asparagine glycosylation.

This sequence belongs to the tetrathionate hydrolase family. Monomer and homodimer; in equilibrium.

It localises to the cell surface. The catalysed reaction is tetrathionate + H2O = sulfur + thiosulfate + sulfate + H(+). In terms of biological role, catalyzes the hydrolysis of tetrathionate to generate elemental sulfur, thiosulfate and sulfate. The protein is Tetrathionate hydrolase of Acidianus ambivalens (Desulfurolobus ambivalens).